The primary structure comprises 128 residues: MPKTIITPPGTGKPLAPFVPGTLADGVVYVSGTLAFDKNNNVVHVGDAAAQTRHVLETIKSVIETAGGCMDDVTFNSIFLTDWQNYAAINQVYAEYFPGDKPARYCIQCGLVKPDALIEIATVAHIGR.

Belongs to the RutC family.

The catalysed reaction is (Z)-3-aminoacrylate + H2O + H(+) = 3-oxopropanoate + NH4(+). In terms of biological role, involved in pyrimidine catabolism. Catalyzes the deamination of 3-aminoacrylate to malonic semialdehyde, a reaction that can also occur spontaneously. RutC may facilitate the reaction and modulate the metabolic fitness, rather than catalyzing essential functions. This Serratia proteamaculans (strain 568) protein is 3-aminoacrylate deaminase RutC.